The chain runs to 110 residues: Keratin, type II cytoskeletal 8 (110 aa).

The interval 1–12 (MSTSGPRAFSSR) is head. An IF rod domain is found at 1–110 (MSTSGPRAFS…LDIEIATYRK (110 aa)). 4 positions are modified to phosphoserine: Ser-2, Ser-4, Ser-10, and Ser-11. Arg-12 bears the Omega-N-methylarginine mark. The tract at residues 13–25 (FASFIDKVRWSLL) is coil 1A. Positions 26-39 (QQQKSNMDNMFESY) are linker 1. Lys-29 participates in a covalent cross-link: Glycyl lysine isopeptide (Lys-Gly) (interchain with G-Cter in SUMO2). Residues 40–79 (INNLRDVDEAYMNKVELESRLEGLTDEINFLRQIHEEEIR) form a coil 1B region. Position 53 is an N6-acetyllysine (Lys-53). A phosphoserine mark is found at Ser-80 and Ser-85. Positions 80 to 86 (SLDMDSI) are linker 12. The coil 2 stretch occupies residues 87–110 (IAEVRHGDDLRRLALDIEIATYRK). Residues 88 to 99 (AEVRHGDDLRRL) form a necessary for interaction with PNN region. A Glycyl lysine isopeptide (Lys-Gly) (interchain with G-Cter in SUMO2) cross-link involves residue Lys-110.

The protein belongs to the intermediate filament family. Heterotetramer of two type I and two type II keratins. Forms a heterodimer with KRT18. Associates with KRT20. Interacts with PNN. When associated with KRT19, interacts with DMD. Interacts with TCHP. Interacts with APEX1. Interacts with GPER1. Interacts with EPPK1. Interacts with PKP1 and PKP2. O-glycosylated. O-GlcNAcylation at multiple sites increases solubility, and decreases stability by inducing proteasomal degradation. Post-translationally, O-glycosylated (O-GlcNAcylated), in a cell cycle-dependent manner.

The protein resides in the cytoplasm. The protein localises to the nucleus. It is found in the nucleoplasm. Its subcellular location is the nucleus matrix. Functionally, together with KRT19, helps to link the contractile apparatus to dystrophin at the costameres of striated muscle. This chain is Keratin, type II cytoskeletal 8, found in Mesocricetus auratus (Golden hamster).